We begin with the raw amino-acid sequence, 539 residues long: 2-isopropylmalate synthase (539 aa).

The 262-residue stretch at 8 to 269 folds into the Pyruvate carboxyltransferase domain; that stretch reads VLIFDTTLRD…YFNPFFGRPP (262 aa). Positions 17, 208, 210, and 244 each coordinate Mn(2+). The interval 408 to 539 is regulatory domain; the sequence is QLKLVQVSCG…DLAKVDKKGI (132 aa).

This sequence belongs to the alpha-IPM synthase/homocitrate synthase family. LeuA type 1 subfamily. Homodimer. It depends on Mn(2+) as a cofactor.

The protein localises to the cytoplasm. The catalysed reaction is 3-methyl-2-oxobutanoate + acetyl-CoA + H2O = (2S)-2-isopropylmalate + CoA + H(+). It functions in the pathway amino-acid biosynthesis; L-leucine biosynthesis; L-leucine from 3-methyl-2-oxobutanoate: step 1/4. Its function is as follows. Catalyzes the condensation of the acetyl group of acetyl-CoA with 3-methyl-2-oxobutanoate (2-ketoisovalerate) to form 3-carboxy-3-hydroxy-4-methylpentanoate (2-isopropylmalate). This chain is 2-isopropylmalate synthase, found in Prochlorococcus marinus (strain NATL1A).